The chain runs to 378 residues: Dual-specificity RNA methyltransferase RlmN (378 aa).

Residue glutamate 96 is the Proton acceptor of the active site. The Radical SAM core domain maps to 102–342 (QGGRGTLCVS…VRTTRGDDID (241 aa)). Cysteine 109 and cysteine 345 are joined by a disulfide. [4Fe-4S] cluster is bound by residues cysteine 116, cysteine 120, and cysteine 123. S-adenosyl-L-methionine is bound by residues 170 to 171 (GE), serine 202, 224 to 226 (SLH), and asparagine 302. Residue cysteine 345 is the S-methylcysteine intermediate of the active site.

Belongs to the radical SAM superfamily. RlmN family. Requires [4Fe-4S] cluster as cofactor.

Its subcellular location is the cytoplasm. It carries out the reaction adenosine(2503) in 23S rRNA + 2 reduced [2Fe-2S]-[ferredoxin] + 2 S-adenosyl-L-methionine = 2-methyladenosine(2503) in 23S rRNA + 5'-deoxyadenosine + L-methionine + 2 oxidized [2Fe-2S]-[ferredoxin] + S-adenosyl-L-homocysteine. It catalyses the reaction adenosine(37) in tRNA + 2 reduced [2Fe-2S]-[ferredoxin] + 2 S-adenosyl-L-methionine = 2-methyladenosine(37) in tRNA + 5'-deoxyadenosine + L-methionine + 2 oxidized [2Fe-2S]-[ferredoxin] + S-adenosyl-L-homocysteine. Specifically methylates position 2 of adenine 2503 in 23S rRNA and position 2 of adenine 37 in tRNAs. m2A2503 modification seems to play a crucial role in the proofreading step occurring at the peptidyl transferase center and thus would serve to optimize ribosomal fidelity. The chain is Dual-specificity RNA methyltransferase RlmN from Pseudomonas paraeruginosa (strain DSM 24068 / PA7) (Pseudomonas aeruginosa (strain PA7)).